We begin with the raw amino-acid sequence, 1023 residues long: Sodium/potassium-transporting ATPase subunit alpha-1 (1023 aa).

Positions 1–5 (MGKGV) are excised as a propeptide. Basic and acidic residues predominate over residues 1 to 11 (MGKGVGRDKYE). The tract at residues 1-38 (MGKGVGRDKYEPAAVSEHGDKKSKKAKKERDMDELKKE) is disordered. Topologically, residues 6 to 87 (GRDKYEPAAV…NALTPPPTTP (82 aa)) are cytoplasmic. K9 carries the post-translational modification N6-acetyllysine. At Y10 the chain carries Phosphotyrosine. At S16 the chain carries Phosphoserine; by PKC. K21 bears the N6-acetyllysine mark. Position 23 is a phosphoserine; by PKC (S23). The span at 28–38 (KERDMDELKKE) shows a compositional bias: basic and acidic residues. S40 and S47 each carry phosphoserine. The phosphoinositide-3 kinase binding stretch occupies residues 82-84 (PPP). The chain crosses the membrane as a helical span at residues 88 to 108 (EWVKFCRQLFGGFSMLLWIGA). Over 109–131 (ILCFLAYGIRSATEEEPPNDDLY) the chain is Extracellular. The helical transmembrane segment at 132–152 (LGVVLSAVVIITGCFSYYQEA) threads the bilayer. Topologically, residues 153-288 (KSSKIMESFK…GGQTPIAEEI (136 aa)) are cytoplasmic. Residues 216-235 (SSLTGESEPQTRSPDFTNEN) form a disordered region. S228 carries the post-translational modification Phosphoserine. Position 260 is a phosphotyrosine (Y260). Residues 289–308 (EHFIHLITGVAVFLGVSFFI) form a helical membrane-spanning segment. Topologically, residues 309–320 (LSLILEYTWLEA) are extracellular. A helical transmembrane segment spans residues 321-338 (VIFLIGIIVANVPEGLLA). Residues 339 to 772 (TVTVCLTLTA…EEGRLIFDNL (434 aa)) are Cytoplasmic-facing. Catalysis depends on D376, which acts as the 4-aspartylphosphate intermediate. Phosphoserine occurs at positions 452 and 484. An ATP-binding site is contributed by K487. Position 542 is a phosphotyrosine (Y542). Positions 596 to 717 (RAAVPDAVGK…QGAIVAVTGD (122 aa)) are mediates interaction with SCN7A. K661 carries the N6-succinyllysine modification. Phosphoserine occurs at positions 668 and 675. Positions 717 and 721 each coordinate Mg(2+). The helical transmembrane segment at 773 to 792 (KKSIAYTLTSNIPEITPFLI) threads the bilayer. The Extracellular portion of the chain corresponds to 793 to 802 (FIIANIPLPL). Residues 803–823 (GTVTILCIDLGTDMVPAISLA) traverse the membrane as a helical segment. At 824 to 843 (YEQAESDIMKRQPRNPKTDK) the chain is on the cytoplasmic side. The helical transmembrane segment at 844–866 (LVNERLISMAYGQIGMIQALGGF) threads the bilayer. The Extracellular portion of the chain corresponds to 867–918 (FTYFVILAENGFLPFHLLGIRETWDDRWINDVEDSYGQQWTYEQRKIVEFTC). A helical membrane pass occupies residues 919 to 938 (HTAFFVSIVVVQWADLVICK). Over 939–951 (TRRNSVFQQGMKN) the chain is Cytoplasmic. S943 bears the Phosphoserine; by PKA mark. The chain crosses the membrane as a helical span at residues 952–970 (KILIFGLFEETALAAFLSY). At 971–985 (CPGMGAALRMYPLKP) the chain is on the extracellular side. Residues 986–1006 (TWWFCAFPYSLLIFVYDEVRK) traverse the membrane as a helical segment. The Cytoplasmic portion of the chain corresponds to 1007-1023 (LIIRRRPGGWVEKETYY).

This sequence belongs to the cation transport ATPase (P-type) (TC 3.A.3) family. Type IIC subfamily. In terms of assembly, the sodium/potassium-transporting ATPase is composed of a catalytic alpha subunit, an auxiliary non-catalytic beta subunit and an additional regulatory subunit. Interacts with regulatory subunit FXYD1. Interacts with regulatory subunit FXYD3. Interacts with SLC35G1 and STIM1. Interacts with SIK1. Interacts with CLN3; this interaction regulates the sodium/potassium-transporting ATPase complex localization at the plasma membrane. Interacts with SCN7A; activates ATP1A1 P-type sodium:potassium-exchanging transporter activity which indirectly signals to nearby neurons to regulate sodium homeostasis. In terms of processing, phosphorylation on Tyr-10 modulates pumping activity. Phosphorylation of Ser-943 by PKA modulates the response of ATP1A1 to PKC. Dephosphorylation by protein phosphatase 2A (PP2A) following increases in intracellular sodium, leading to increase catalytic activity. As to expression, expressed in the central nervous system, in most motor and sensory axons of the ventral and dorsal roots, as well as in the large motor neurons of the ventral horn (at protein level).

It localises to the cell membrane. The protein localises to the basolateral cell membrane. It is found in the sarcolemma. Its subcellular location is the cell projection. The protein resides in the axon. It localises to the melanosome. It catalyses the reaction K(+)(out) + Na(+)(in) + ATP + H2O = K(+)(in) + Na(+)(out) + ADP + phosphate + H(+). This is the catalytic component of the active enzyme, which catalyzes the hydrolysis of ATP coupled with the exchange of sodium and potassium ions across the plasma membrane. This action creates the electrochemical gradient of sodium and potassium ions, providing the energy for active transport of various nutrients. Could also be part of an osmosensory signaling pathway that senses body-fluid sodium levels and controls salt intake behavior as well as voluntary water intake to regulate sodium homeostasis. In Rattus norvegicus (Rat), this protein is Sodium/potassium-transporting ATPase subunit alpha-1 (Atp1a1).